Reading from the N-terminus, the 215-residue chain is UPF0502 protein Shew_1617 (215 aa).

Belongs to the UPF0502 family.

This Shewanella loihica (strain ATCC BAA-1088 / PV-4) protein is UPF0502 protein Shew_1617.